The primary structure comprises 79 residues: uncharacterized protein (79 aa).

It belongs to the asfivirus D79L family.

This is an uncharacterized protein from African swine fever virus (strain Badajoz 1971 Vero-adapted) (Ba71V).